The chain runs to 383 residues: Glucose-1-phosphate adenylyltransferase (383 aa).

Residues Tyr100, Gly165, 180–181 (EK), and Ser191 contribute to the alpha-D-glucose 1-phosphate site.

It belongs to the bacterial/plant glucose-1-phosphate adenylyltransferase family. Homotetramer.

The catalysed reaction is alpha-D-glucose 1-phosphate + ATP + H(+) = ADP-alpha-D-glucose + diphosphate. It participates in glycan biosynthesis; glycogen biosynthesis. Its function is as follows. Involved in the biosynthesis of ADP-glucose, a building block required for the elongation reactions to produce glycogen. Catalyzes the reaction between ATP and alpha-D-glucose 1-phosphate (G1P) to produce pyrophosphate and ADP-Glc. The protein is Glucose-1-phosphate adenylyltransferase of Clostridium kluyveri (strain ATCC 8527 / DSM 555 / NBRC 12016 / NCIMB 10680 / K1).